Consider the following 233-residue polypeptide: Orotidine 5'-phosphate decarboxylase (233 aa).

Substrate-binding positions include D11, K34, 61 to 70 (DLKLHDIPNT), T117, R179, Q188, G208, and R209. K63 serves as the catalytic Proton donor.

Belongs to the OMP decarboxylase family. Type 1 subfamily. As to quaternary structure, homodimer.

It carries out the reaction orotidine 5'-phosphate + H(+) = UMP + CO2. The protein operates within pyrimidine metabolism; UMP biosynthesis via de novo pathway; UMP from orotate: step 2/2. Functionally, catalyzes the decarboxylation of orotidine 5'-monophosphate (OMP) to uridine 5'-monophosphate (UMP). The sequence is that of Orotidine 5'-phosphate decarboxylase from Streptococcus pneumoniae (strain JJA).